Consider the following 213-residue polypeptide: Ripening-related protein 3 (213 aa).

The N-terminal stretch at 1-32 is a signal peptide; the sequence is MAGAMTMSRRRLSHALLLVLAILPNLAALAVA.

This sequence belongs to the kiwellin family.

The protein resides in the secreted. The protein is Ripening-related protein 3 of Oryza sativa subsp. japonica (Rice).